Here is a 216-residue protein sequence, read N- to C-terminus: Imidazoleglycerol-phosphate dehydratase (216 aa).

The protein belongs to the imidazoleglycerol-phosphate dehydratase family.

It localises to the cytoplasm. It catalyses the reaction D-erythro-1-(imidazol-4-yl)glycerol 3-phosphate = 3-(imidazol-4-yl)-2-oxopropyl phosphate + H2O. It participates in amino-acid biosynthesis; L-histidine biosynthesis; L-histidine from 5-phospho-alpha-D-ribose 1-diphosphate: step 6/9. This Nocardia farcinica (strain IFM 10152) protein is Imidazoleglycerol-phosphate dehydratase.